The following is a 618-amino-acid chain: DNA mismatch repair protein MutL (618 aa).

It belongs to the DNA mismatch repair MutL/HexB family.

Functionally, this protein is involved in the repair of mismatches in DNA. It is required for dam-dependent methyl-directed DNA mismatch repair. May act as a 'molecular matchmaker', a protein that promotes the formation of a stable complex between two or more DNA-binding proteins in an ATP-dependent manner without itself being part of a final effector complex. In Bradyrhizobium sp. (strain BTAi1 / ATCC BAA-1182), this protein is DNA mismatch repair protein MutL.